Here is a 173-residue protein sequence, read N- to C-terminus: Ribulose bisphosphate carboxylase small subunit, chloroplastic 2 (173 aa).

Residues 1–33 constitute a chloroplast transit peptide; sequence VVLSKECAKPLATPKVTLNKRGFATTIATKNRE.

The protein belongs to the RuBisCO small chain family. In terms of assembly, heterohexadecamer of 8 large and 8 small subunits.

It is found in the plastid. The protein localises to the chloroplast. RuBisCO catalyzes two reactions: the carboxylation of D-ribulose 1,5-bisphosphate, the primary event in carbon dioxide fixation, as well as the oxidative fragmentation of the pentose substrate. Both reactions occur simultaneously and in competition at the same active site. Although the small subunit is not catalytic it is essential for maximal activity. The sequence is that of Ribulose bisphosphate carboxylase small subunit, chloroplastic 2 from Acetabularia acetabulum (Mermaid's wine glass).